The sequence spans 183 residues: Nucleoside triphosphate pyrophosphatase (183 aa).

Asp-71 (proton acceptor) is an active-site residue.

The protein belongs to the Maf family. A divalent metal cation is required as a cofactor.

It is found in the cytoplasm. It catalyses the reaction a ribonucleoside 5'-triphosphate + H2O = a ribonucleoside 5'-phosphate + diphosphate + H(+). The enzyme catalyses a 2'-deoxyribonucleoside 5'-triphosphate + H2O = a 2'-deoxyribonucleoside 5'-phosphate + diphosphate + H(+). Nucleoside triphosphate pyrophosphatase. May have a dual role in cell division arrest and in preventing the incorporation of modified nucleotides into cellular nucleic acids. The chain is Nucleoside triphosphate pyrophosphatase from Campylobacter jejuni subsp. doylei (strain ATCC BAA-1458 / RM4099 / 269.97).